Here is a 204-residue protein sequence, read N- to C-terminus: Auxin-binding protein 4 (204 aa).

The first 41 residues, 1 to 41 (MVRRRPATGAAPRPHLAAVGRGLLLASVLAAAASSLPVAES), serve as a signal peptide directing secretion. Cys43 and Cys196 are oxidised to a cystine. Residues His98, His100, and Glu104 each coordinate Zn(2+). A glycan (N-linked (GlcNAc...) asparagine) is linked at Asn136. Zn(2+) is bound at residue His147. Positions 201–204 (KDEL) match the Prevents secretion from ER motif.

Homodimer.

The protein localises to the endoplasmic reticulum lumen. This is probably a receptor for the plant hormone auxin. The protein is Auxin-binding protein 4 (ABP4) of Zea mays (Maize).